Here is a 727-residue protein sequence, read N- to C-terminus: Elongation factor 2 (727 aa).

The region spanning 19–260 (EQIRNMGICA…MSIKHLPNPL (242 aa)) is the tr-type G domain. GTP-binding positions include 28 to 35 (AHIDHGKT), 94 to 98 (DTPGH), and 148 to 151 (NKVD). Position 603 is a diphthamide (His603).

It belongs to the TRAFAC class translation factor GTPase superfamily. Classic translation factor GTPase family. EF-G/EF-2 subfamily.

The protein localises to the cytoplasm. Its function is as follows. Catalyzes the GTP-dependent ribosomal translocation step during translation elongation. During this step, the ribosome changes from the pre-translocational (PRE) to the post-translocational (POST) state as the newly formed A-site-bound peptidyl-tRNA and P-site-bound deacylated tRNA move to the P and E sites, respectively. Catalyzes the coordinated movement of the two tRNA molecules, the mRNA and conformational changes in the ribosome. The protein is Elongation factor 2 of Methanococcus maripaludis (strain DSM 14266 / JCM 13030 / NBRC 101832 / S2 / LL).